We begin with the raw amino-acid sequence, 866 residues long: Pentatricopeptide repeat-containing protein At1g15510, chloroplastic (866 aa).

A chloroplast-targeting transit peptide spans 1-52; it reads MASSAQSPHFYLNPGKSNSFQSKAYKQRNVNFYWNFGIRRLFLRKSQGLSVL. PPR repeat units follow at residues 58–92, 93–123, 128–158, 159–194, 195–229, 230–260, 261–295, 296–330, 331–365, 366–396, 397–431, 432–466, 467–493, 497–531, 532–561, 562–596, 597–631, and 632–662; these read STHF…RVAV, DEDV…ALSS, GVEL…MSER, NLFS…GVKP, DVYT…GYEL, DIDV…MPRR, DIIS…SVDP, DLMT…GFAV, DISV…DIVS, WTTM…SVKP, DEIT…RLIS, YVIV…NVIS, WTSI…MKMT, NAIT…GVGL, DDFL…SQKK, DVTS…RVRP, DEIT…GVTP, and NLKH…MPVT. Residues 667–742 are type E motif; that stretch reads VWGALLNACR…DAGCSWVEVK (76 aa). A type E(+) motif region spans residues 743–773; sequence GKVHAFLSDDKYHPQTKEINTVLEGFYEKMS. Residues 774–866 form a type DYW motif region; it reads EVGLTKISES…FKDGECSCGD (93 aa).

The protein belongs to the PPR family. PCMP-H subfamily.

The protein resides in the plastid. It localises to the chloroplast. Its function is as follows. Regulates the RNA editing of the chloroplast transcript accD, and is essential for the early stages of chloroplast biogenesis. Required for the RNA editing of the chloroplast transcript ndhF. The chain is Pentatricopeptide repeat-containing protein At1g15510, chloroplastic (PCMP-H73) from Arabidopsis thaliana (Mouse-ear cress).